Here is a 326-residue protein sequence, read N- to C-terminus: Apolipoprotein F (326 aa).

A signal peptide spans 1–35 (MTGLCGYSAPDMRGLRLIMIPVELLLCYLLLHPVD). The propeptide occupies 36–164 (ATSYGKQTNV…EQQSTGRVGR (129 aa)). N118 is a glycosylation site (N-linked (GlcNAc...) asparagine). O-linked (GalNAc...) threonine glycosylation is present at T274. Residue S323 is modified to Phosphoserine.

Belongs to the apolipoprotein F family. O-glycosylated with core 1 or possibly core 8 glycans. As to expression, expressed by the liver and secreted in plasma.

Its subcellular location is the secreted. Minor apolipoprotein that associates with LDL. Inhibits cholesteryl ester transfer protein (CETP) activity and appears to be an important regulator of cholesterol transport. Also associates to a lesser degree with VLDL, Apo-AI and Apo-AII. This is Apolipoprotein F (APOF) from Homo sapiens (Human).